A 317-amino-acid chain; its full sequence is Transmembrane and death domain protein 1 (317 aa).

The signal sequence occupies residues 1–27 (MAARTLASALVLTLWVWALAPAGAVDA). Over 28-218 (MGPHAAVRLA…ERSPMGWAGP (191 aa)) the chain is Extracellular. Over residues 62–73 (ELSRLSEDRLAR) the composition is skewed to basic and acidic residues. The disordered stretch occupies residues 62-106 (ELSRLSEDRLARPEPLNTTSGSPSRRRRREAAEDPAGRVAGPGEV). Positions 66-150 (LSEDRLARPE…DVARELGKNL (85 aa)) constitute a Death domain. A glycan (N-linked (GlcNAc...) asparagine) is linked at Asn-78. A helical membrane pass occupies residues 219-239 (LALGLLTGFVGALGTGALVVL). At 240–317 (LTLWITGGDG…SWGSGALDGL (78 aa)) the chain is on the cytoplasmic side.

The protein resides in the membrane. This Homo sapiens (Human) protein is Transmembrane and death domain protein 1.